Consider the following 28-residue polypeptide: Taicatoxin, alpha-neurotoxin-like component (28 aa).

Cys3 and Cys21 are joined by a disulfide.

The protein belongs to the three-finger toxin family. Long-chain subfamily. Type II alpha-neurotoxin sub-subfamily. Heterotrimer composed of this alpha-neurotoxin-like peptide of 8 kDa, a neurotoxic phospholipase of 16 kDa (AC Q7LZG2) and a serine protease inhibitor of 7 kDa (AC B7S4N9) at an approximate stoichiometry of 1:1:4; non-covalently linked. Expressed by the venom gland.

The protein resides in the secreted. In terms of biological role, the heterotrimer blocks the voltage-dependent L-type calcium channels (Cav1/CACNA1) from the heart, and the small conductance calcium-activated potassium channels (KCa2/KCNN) in the chromaffin cells and in the brain. Is very toxic to mice. This Oxyuranus scutellatus scutellatus (Australian taipan) protein is Taicatoxin, alpha-neurotoxin-like component.